The primary structure comprises 247 residues: ATP synthase subunit a 1 (247 aa).

The next 6 membrane-spanning stretches (helical) occupy residues Tyr32 to Val52, Phe82 to Ile102, Ile112 to Tyr132, Leu141 to Ile161, Gly181 to Val201, and Ala206 to Leu226.

Belongs to the ATPase A chain family. F-type ATPases have 2 components, CF(1) - the catalytic core - and CF(0) - the membrane proton channel. CF(1) has five subunits: alpha(3), beta(3), gamma(1), delta(1), epsilon(1). CF(0) has four main subunits: a, b, b' and c.

Its subcellular location is the cell inner membrane. In terms of biological role, key component of the proton channel; it plays a direct role in the translocation of protons across the membrane. The protein is ATP synthase subunit a 1 of Bradyrhizobium sp. (strain BTAi1 / ATCC BAA-1182).